An 832-amino-acid chain; its full sequence is Adhesin AWP2 (832 aa).

An N-terminal signal peptide occupies residues 1–25 (MRKLPLFMAWKFWLICLYIIKVAST). 16 N-linked (GlcNAc...) asparagine glycosylation sites follow: Asn-187, Asn-290, Asn-372, Asn-390, Asn-435, Asn-448, Asn-472, Asn-482, Asn-507, Asn-512, Asn-515, Asn-534, Asn-562, Asn-579, Asn-695, and Asn-721. The tract at residues 722–747 (QTTSPSMHTTSLVGSENGVSAKTVND) is disordered.

The protein localises to the secreted. It localises to the cell wall. Functionally, mediates cell-substrate adhesion and promotes biofilm formation. The chain is Adhesin AWP2 from Candida glabrata (strain ATCC 2001 / BCRC 20586 / JCM 3761 / NBRC 0622 / NRRL Y-65 / CBS 138) (Yeast).